Here is a 311-residue protein sequence, read N- to C-terminus: Olfactory receptor 287 (311 aa).

At 1–27 (MAWSTGQNLSTPGPFILLGFPGPRSMR) the chain is on the extracellular side. N-linked (GlcNAc...) asparagine glycosylation occurs at N8. The chain crosses the membrane as a helical span at residues 28–53 (IGLFLLFLVMYLLTVVGNLAIISLVG). Residues 54–60 (AHRCLQT) lie on the Cytoplasmic side of the membrane. The helical transmembrane segment at 61–82 (PMYFFLCNLSFLEIWFTTACVP) threads the bilayer. Residues 83-103 (KTLATFAPRGGVISLAGCATQ) lie on the Extracellular side of the membrane. C100 and C192 form a disulfide bridge. A helical transmembrane segment spans residues 104–123 (MYFVFSLGCTEYFLLAVMAY). Residues 124 to 142 (DRYLAICLPLRYGGIMTPG) are Cytoplasmic-facing. A helical transmembrane segment spans residues 143–161 (LAMRLALGSWLCGFSAITV). Residues 162-199 (PATLIARLSFCGSRVINHFFCDISPWIVLSCTDTQVVE) are Extracellular-facing. Residues 200-222 (LVSFGIAFCVILGSCGITLVSYA) form a helical membrane-spanning segment. The Cytoplasmic segment spans residues 223 to 239 (YIITTIIKIPSARGRHR). The helical transmembrane segment at 240–263 (AFSTCSSHLTVVLIWYGSTIFLHV) threads the bilayer. At 264–275 (RTSVESSLDLTK) the chain is on the extracellular side. A helical transmembrane segment spans residues 276-295 (AITVLNTIVTPVLNPFIYTL). Residues 296–311 (RNKDVKEALRRTVKGK) are Cytoplasmic-facing.

This sequence belongs to the G-protein coupled receptor 1 family. As to expression, olfactory epithelium.

It is found in the cell membrane. Odorant receptor. The sequence is that of Olfactory receptor 287 (Olr287) from Rattus norvegicus (Rat).